A 432-amino-acid polypeptide reads, in one-letter code: Tyrosine-protein phosphatase non-receptor type 1 (432 aa).

Methionine 1 carries the N-acetylmethionine modification. A Tyrosine-protein phosphatase domain is found at methionine 3–glycine 277. Position 20 is a phosphotyrosine (tyrosine 20). Serine 50 is subject to Phosphoserine; by CLK1, CLK2 and PKB/AKT1 or PKB/AKT2. Tyrosine 66 is modified (phosphotyrosine; by EGFR). Substrate is bound by residues aspartate 181 and cysteine 215–arginine 221. Cysteine 215 acts as the Phosphocysteine intermediate in catalysis. Cysteine 215 is subject to Cysteine persulfide. Residue cysteine 215 is modified to S-nitrosocysteine; in reversibly inhibited form. Serine 242 and serine 243 each carry phosphoserine; by CLK1 and CLK2. Glutamine 262 contacts substrate. Disordered regions lie at residues glutamate 297–glycine 322 and serine 335–lysine 399. Serine 335, serine 362, and serine 364 each carry phosphoserine. Positions serine 354–serine 364 are enriched in low complexity. A Phosphothreonine modification is found at threonine 367.

Belongs to the protein-tyrosine phosphatase family. Non-receptor class 1 subfamily. As to quaternary structure, interacts with EPHA3 (phosphorylated); dephosphorylates EPHA3 and may regulate its trafficking and function. Interacts with MET. Interacts with NCK1. Ser-50 is the major site of phosphorylation as compared to Ser-242 and Ser-243. Activated by phosphorylation at Ser-50. Post-translationally, S-nitrosylation of Cys-215 inactivates the enzyme activity. In terms of processing, sulfhydration at Cys-215 following endoplasmic reticulum stress inactivates the enzyme activity, promoting EIF2AK3/PERK activity. Most abundant in testis. Also found in kidney, spleen, muscle, liver, heart and brain.

It is found in the endoplasmic reticulum membrane. It carries out the reaction O-phospho-L-tyrosyl-[protein] + H2O = L-tyrosyl-[protein] + phosphate. Functionally, tyrosine-protein phosphatase which acts as a regulator of endoplasmic reticulum unfolded protein response. Mediates dephosphorylation of EIF2AK3/PERK; inactivating the protein kinase activity of EIF2AK3/PERK. May play an important role in CKII- and p60c-src-induced signal transduction cascades. May regulate the EFNA5-EPHA3 signaling pathway which modulates cell reorganization and cell-cell repulsion. May also regulate the hepatocyte growth factor receptor signaling pathway through dephosphorylation of MET. This chain is Tyrosine-protein phosphatase non-receptor type 1 (Ptpn1), found in Mus musculus (Mouse).